The following is a 220-amino-acid chain: MTFAKIKFSAQIRLETGLHIGGSDAFAAIGAIDSPVIKDPITNIPIIPGSSLKGKMRTLLAKVYNEKVAEKPSDDSDILSRLFGNSKDKRFKMGRLIFRDAFLSNADELDSLGVRSYTEVKFENTIDRITAEANPRQIERAIRNSTFDFELIYEITDENENQVEEDFKVIRDGLKLLELDYLGGSGSRGYGKVAFEKLKATTVFGNYDVKTLNELLTAEV.

Belongs to the CRISPR-associated Csm3 family. In terms of assembly, part of the Csm effector complex that includes at least Cas10(1), Csm2(3), Csm3(5), Csm4(1), Csm5(1) and mature crRNA. The Csm complex is elongated and slightly twisted with a maximal length of 215 Angstroms and a diameter of 75-80 Angstroms. It has been modeled to have a central protein filamant of Csm3 subunits along which the dsRNA helix of paired crRNA and target RNA binds. The filament is capped at one end by Cas10 and Csm4 and at the other end by Csm5; ssDNA is thought to bind to the N-terminal HD domain of Cas10. Csm with a precursor crRNA does not include Csm5, while Cas6, the enzyme probably involved in pre-crRNA processing, is found associated with a subset of the Csm complex. Requires a metal cation as cofactor.

With respect to regulation, target ssRNase is inhibited by EDTA. Its function is as follows. CRISPR (clustered regularly interspaced short palindromic repeat) is an adaptive immune system that provides protection against mobile genetic elements (viruses, transposable elements and conjugative plasmids). CRISPR clusters contain spacers, sequences complementary to antecedent mobile elements, and target invading nucleic acids. CRISPR clusters are transcribed and processed into CRISPR RNA (crRNA). The type III-A Csm effector complex binds crRNA and acts as a crRNA-guided RNase, DNase and cyclic oligoadenylate synthase; binding of target RNA cognate to the crRNA is required for all activities. In a heterologous host this Csm effector complex restricts ssRNA phage MS2, suggesting it may target RNA viruses in vivo. Functionally, csm functions as a non-specific ssDNase. Base-pairing between crRNA and target RNA to form a ternary Csm complex activates a ssDNase activity; target RNA cleavage suppresses the ssDNase, a temporal control that prevents uncontrolled DNA degradation. Viral RNA transcripts probably tether the Csm complex to the viral genome, recruiting Cas10 ssDNA activity which is able to degrade DNA in the transcription bubble, spatially controlling the DNase activity. This subunit has the target ssRNA endonuclease activity; it cleaves multiple sites in the target RNA at 6 nucleotide intervals. The number of cleavage sites in the target RNA correlates with the number of Csm3 subunits in the Csm effector complex. In the Csm complex target RNA and ssDNA are cleaved simultaneously, although RNase activity (of Csm3) is much faster. RNA cleavage by Csm3 is not required for ssDNase activity as Csm complex with inactive Csm3 still has ssDNase activity; however as the cleaved target RNA products dissociate away ssDNase activity decreases. In Streptococcus thermophilus, this protein is CRISPR system Cms endoribonuclease Csm3.